A 143-amino-acid chain; its full sequence is 3-dehydroquinate dehydratase (143 aa).

Tyr-22 acts as the Proton acceptor in catalysis. Substrate-binding residues include Asn-73, His-79, and Asp-86. His-99 functions as the Proton donor in the catalytic mechanism. Residues 100–101 (IS) and Arg-110 contribute to the substrate site.

The protein belongs to the type-II 3-dehydroquinase family. As to quaternary structure, homododecamer.

It catalyses the reaction 3-dehydroquinate = 3-dehydroshikimate + H2O. Its pathway is metabolic intermediate biosynthesis; chorismate biosynthesis; chorismate from D-erythrose 4-phosphate and phosphoenolpyruvate: step 3/7. Catalyzes a trans-dehydration via an enolate intermediate. This Salinispora arenicola (strain CNS-205) protein is 3-dehydroquinate dehydratase.